Here is a 98-residue protein sequence, read N- to C-terminus: Integration host factor subunit alpha (98 aa).

Basic and acidic residues predominate over residues 53-69; the sequence is DLREKSERPGRNPKTGE. The segment at 53–73 is disordered; the sequence is DLREKSERPGRNPKTGEDIPI.

It belongs to the bacterial histone-like protein family. Heterodimer of an alpha and a beta chain.

This protein is one of the two subunits of integration host factor, a specific DNA-binding protein that functions in genetic recombination as well as in transcriptional and translational control. The sequence is that of Integration host factor subunit alpha from Aliivibrio salmonicida (strain LFI1238) (Vibrio salmonicida (strain LFI1238)).